Consider the following 470-residue polypeptide: E3 SUMO-protein ligase EGR2 (470 aa).

Residues proline 126 to proline 141 are compositionally biased toward low complexity. 3 disordered regions span residues proline 126 to threonine 153, proline 159 to threonine 178, and proline 185 to serine 210. Over residues serine 190–tyrosine 202 the composition is skewed to low complexity. The residue at position 247 (lysine 247) is an N6-acetyllysine; by EP300. Gly residues predominate over residues glycine 275–glycine 291. Residues glycine 275 to aspartate 345 are disordered. C2H2-type zinc fingers lie at residues tyrosine 337–histidine 361, phenylalanine 367–histidine 389, and phenylalanine 395–histidine 417. The disordered stretch occupies residues aspartate 408–proline 470. The segment covering arginine 412–glutamate 422 has biased composition (basic residues). The span at serine 426 to serine 439 shows a compositional bias: low complexity. The segment covering glycine 440–leucine 450 has biased composition (gly residues).

Belongs to the EGR C2H2-type zinc-finger protein family. In terms of assembly, interacts with HCFC1. Interacts with WWP2. Interacts with UBC9. Interacts with CITED1. Interacts (via phosphorylated form) with SFN. Ubiquitinated by WWP2 leading to proteasomal degradation. In terms of processing, acetylated at Lys-247. May be deacetylated by HDAC6, HDAC10 or SIRT1. In terms of tissue distribution, expressed mainly in the thymus.

It is found in the nucleus. The protein operates within protein modification; protein sumoylation. Sequence-specific DNA-binding transcription factor. Plays a role in hindbrain segmentation by regulating the expression of a subset of homeobox containing genes and in Schwann cell myelination by regulating the expression of genes involved in the formation and maintenance of myelin. Binds to two EGR2-consensus sites EGR2A (5'-CTGTAGGAG-3') and EGR2B (5'-ATGTAGGTG-3') in the HOXB3 enhancer and promotes HOXB3 transcriptional activation. Binds to specific DNA sites located in the promoter region of HOXA4, HOXB2 and ERBB2. Regulates hindbrain segmentation by controlling the expression of Hox genes, such as HOXA4, HOXB3 and HOXB2, and thereby specifying odd and even rhombomeres. Promotes the expression of HOXB3 in the rhombomere r5 and of HOXB3 in r3 and r5 in the hindbrain. Regulates myelination in the peripheral nervous system after birth, possibly by regulating the expression of myelin proteins, such as MPZ, and by promoting the differentiation of Schwann cells. Involved in the development of the jaw openener musculature, probably by playing a role in its innervation through trigeminal motor neurons. May play a role in adipogenesis, possibly by regulating the expression of CEBPB. Functionally, E3 SUMO-protein ligase helping SUMO1 conjugation to its coregulators NAB1 and NAB2, whose sumoylation down-regulates EGR2 transcriptional activity. The protein is E3 SUMO-protein ligase EGR2 (Egr2) of Mus musculus (Mouse).